Consider the following 250-residue polypeptide: ATP synthase subunit a (250 aa).

The next 6 helical transmembrane spans lie at 25-45, 84-104, 115-135, 141-161, 187-209, and 223-243; these read VSFT…FFFL, VFFP…VIGL, IVVT…YGFY, FLHL…IVLI, ALKV…WLGA, and ELLV…IYLN.

It belongs to the ATPase A chain family. As to quaternary structure, F-type ATPases have 2 components, CF(1) - the catalytic core - and CF(0) - the membrane proton channel. CF(1) has five subunits: alpha(3), beta(3), gamma(1), delta(1), epsilon(1). CF(0) has three main subunits: a(1), b(2) and c(9-12). The alpha and beta chains form an alternating ring which encloses part of the gamma chain. CF(1) is attached to CF(0) by a central stalk formed by the gamma and epsilon chains, while a peripheral stalk is formed by the delta and b chains.

It localises to the cell inner membrane. Key component of the proton channel; it plays a direct role in the translocation of protons across the membrane. This Azorhizobium caulinodans (strain ATCC 43989 / DSM 5975 / JCM 20966 / LMG 6465 / NBRC 14845 / NCIMB 13405 / ORS 571) protein is ATP synthase subunit a.